We begin with the raw amino-acid sequence, 320 residues long: Glyoxylate/hydroxypyruvate reductase B (320 aa).

Active-site residues include arginine 233 and glutamate 262. Histidine 281 serves as the catalytic Proton donor.

Belongs to the D-isomer specific 2-hydroxyacid dehydrogenase family. GhrB subfamily. As to quaternary structure, homodimer.

It is found in the cytoplasm. The enzyme catalyses glycolate + NADP(+) = glyoxylate + NADPH + H(+). It carries out the reaction (R)-glycerate + NAD(+) = 3-hydroxypyruvate + NADH + H(+). It catalyses the reaction (R)-glycerate + NADP(+) = 3-hydroxypyruvate + NADPH + H(+). In terms of biological role, catalyzes the NADPH-dependent reduction of glyoxylate and hydroxypyruvate into glycolate and glycerate, respectively. In Pectobacterium atrosepticum (strain SCRI 1043 / ATCC BAA-672) (Erwinia carotovora subsp. atroseptica), this protein is Glyoxylate/hydroxypyruvate reductase B.